Here is a 303-residue protein sequence, read N- to C-terminus: MDKVIQELKELEVGKVLENEPLSNHTTIKIGGPADVLVIPKDIQAVKDTMKVVKKHGVKWTAIGRGSNLLVLDEGIRGVVIKLGQGLDHMEIDGEQVTVGGGYSVVRLATGISKKGLSGLEFAAGIPGSVGGAVYMNAGAHGSDISKVLVKALILFEDGTIEWLTNEEMAFSYRTSILQNKRPGICLEAVLQLEQKERDQIVAQMQKNKDYRKETQPVSNPCAGSIFRNPLPEHAGRLVEEAGLKGHQIGGAKVSEMHGNFIVNAGGATAKDVLDLIAFIQKTIKEKYDIDMHTEVEIIGEKR.

In terms of domain architecture, FAD-binding PCMH-type spans 29 to 196 (KIGGPADVLV…LEAVLQLEQK (168 aa)). Residue Arg174 is part of the active site. Ser225 serves as the catalytic Proton donor. Residue Glu295 is part of the active site.

Belongs to the MurB family. FAD is required as a cofactor.

It is found in the cytoplasm. The catalysed reaction is UDP-N-acetyl-alpha-D-muramate + NADP(+) = UDP-N-acetyl-3-O-(1-carboxyvinyl)-alpha-D-glucosamine + NADPH + H(+). Its pathway is cell wall biogenesis; peptidoglycan biosynthesis. Cell wall formation. The chain is UDP-N-acetylenolpyruvoylglucosamine reductase from Bacillus licheniformis (strain ATCC 14580 / DSM 13 / JCM 2505 / CCUG 7422 / NBRC 12200 / NCIMB 9375 / NCTC 10341 / NRRL NRS-1264 / Gibson 46).